The following is a 617-amino-acid chain: BPI fold-containing family B member 4 (617 aa).

Positions 1-17 are cleaved as a signal peptide; it reads MWTAWCVAALSVAAVCG. Residues 124 to 149 form a disordered region; sequence RPSDSAYHRGPGRYRSAADPSSAGRL. N-linked (GlcNAc...) asparagine glycosylation occurs at asparagine 275. A disulfide bond links cysteine 297 and cysteine 334.

This sequence belongs to the BPI/LBP/Plunc superfamily. BPI/LBP family. In terms of tissue distribution, highly expressed in olfactory mucosa but undetectable in thymus, kidney, lung, brain, spleen and liver.

The protein localises to the secreted. Its subcellular location is the cytoplasm. In terms of biological role, may have the capacity to recognize and bind specific classes of odorants. May act as a carrier molecule, transporting odorants across the mucus layer to access receptor sites. May serve as a primary defense mechanism by recognizing and removing potentially harmful odorants or pathogenic microorganisms from the mucosa or clearing excess odorant from mucus to enable new odorant stimuli to be received. This is BPI fold-containing family B member 4 (Bpifb4) from Rattus norvegicus (Rat).